The sequence spans 120 residues: Large ribosomal subunit protein bL17 (120 aa).

Belongs to the bacterial ribosomal protein bL17 family. Part of the 50S ribosomal subunit. Contacts protein L32.

The sequence is that of Large ribosomal subunit protein bL17 from Mesomycoplasma hyopneumoniae (strain 232) (Mycoplasma hyopneumoniae).